A 388-amino-acid chain; its full sequence is Leucine aminopeptidase 1 (388 aa).

The signal sequence occupies residues 1 to 19 (MKLPALLILGVAASTMVLA). Positions 20–88 (AIAPDQVPLN…LPKVFPTPAV (69 aa)) are excised as a propeptide. Asn96, Asn119, Asn149, Asn164, and Asn181 each carry an N-linked (GlcNAc...) asparagine glycan. 2 residues coordinate Zn(2+): His189 and Asp207. The N-linked (GlcNAc...) asparagine glycan is linked to Asn232. Positions 246 and 273 each coordinate Zn(2+). Cys322 and Cys326 are oxidised to a cystine. A Zn(2+)-binding site is contributed by His355.

This sequence belongs to the peptidase M28 family. M28E subfamily. Monomer. Requires Zn(2+) as cofactor.

The protein localises to the secreted. In terms of biological role, extracellular aminopeptidase that allows assimilation of proteinaceous substrates. This chain is Leucine aminopeptidase 1 (LAP1), found in Paracoccidioides brasiliensis (strain Pb03).